The sequence spans 680 residues: Dihydroxyacetone phosphate acyltransferase (680 aa).

2 positions are modified to phosphoserine: S12 and S17. An HXXXXD motif motif is present at residues 162-167 (HRSYID). Position 643 is an N6-acetyllysine (K643). The short motif at 678–680 (AKL) is the Microbody targeting signal element.

It belongs to the GPAT/DAPAT family. Part of a heterotrimeric complex composed of GNPAT, AGPS and a modified form of GNPAT.

The protein resides in the peroxisome membrane. The enzyme catalyses dihydroxyacetone phosphate + an acyl-CoA = a 1-acylglycerone 3-phosphate + CoA. The catalysed reaction is dihydroxyacetone phosphate + hexadecanoyl-CoA = 1-hexadecanoylglycerone 3-phosphate + CoA. It participates in membrane lipid metabolism; glycerophospholipid metabolism. In terms of biological role, dihydroxyacetonephosphate acyltransferase catalyzing the first step in the biosynthesis of plasmalogens, a subset of phospholipids that differ from other glycerolipids by having an alkyl chain attached through a vinyl ether linkage at the sn-1 position of the glycerol backbone, and which unique physical properties have an impact on various aspects of cell signaling and membrane biology. The sequence is that of Dihydroxyacetone phosphate acyltransferase from Bos taurus (Bovine).